The sequence spans 398 residues: MGMPFIKHVRAFTVRGGGADYHDQGGGHWIDDHIATPMSKYPEYRQSRQSFGINVLGTLVVEIEASDGTVGFSVTTGGDLGCFIVEKHLARFLEGARVTDIEKMWDQMYSATLYYGRKGIVINTISGVDLALWDLLAKIRKEPVHALLGGPVRDELIFYATGARPDLARQMGFIGGKMPLHHAPAEREEGLAKNLDMIGDMRSKVGKDFWLMLDCWMSLDVEYATRLATAARNEHGLKWIEEALSPDDYWGYAELRRNVPRGMLVTTGEHEATRWGFRLLLEMGCCDIIQPDVGWCGGITELIKISNLADAHGKLVVPHGSSVYSYHFVITRQNSPFAEFLMMAPKADEVVPMFNPQLLDEPVPVNGRIKASALDAPGFGVRLNPDIALHRPYPRQAA.

The substrate site is built by histidine 22 and arginine 48. Mg(2+)-binding residues include aspartate 214, glutamate 241, and glutamate 269. Histidine 319 functions as the Proton acceptor in the catalytic mechanism. Glutamate 339 lines the substrate pocket.

It belongs to the mandelate racemase/muconate lactonizing enzyme family. RhamD subfamily. As to quaternary structure, homooctamer; tetramer of dimers. Mg(2+) is required as a cofactor.

The catalysed reaction is L-rhamnonate = 2-dehydro-3-deoxy-L-rhamnonate + H2O. Its function is as follows. Catalyzes the dehydration of L-rhamnonate to 2-keto-3-deoxy-L-rhamnonate (KDR). This is L-rhamnonate dehydratase from Verminephrobacter eiseniae (strain EF01-2).